The chain runs to 743 residues: Pentatricopeptide repeat-containing protein At2g16880 (743 aa).

PPR repeat units lie at residues 130–164 (SKALFDIALSAYLHEGKPHVALQIFQKMIRLKLKP), 165–202 (NLLTCNTLLIGLVRYPSSFSISSAREVFDDMVKIGVSL), 203–233 (NVQTFNVLVNGYCLEGKLEDALGMLERMVSE), 239–273 (DNVTYNTILKAMSKKGRLSDLKELLLDMKKNGLVP), 274–308 (NRVTYNNLVYGYCKLGSLKEAFQIVELMKQTNVLP), 309–343 (DLCTYNILINGLCNAGSMREGLELMDAMKSLKLQP), 344–378 (DVVTYNTLIDGCFELGLSLEARKLMEQMENDGVKA), 379–414 (NQVTHNISLKWLCKEEKREAVTRKVKELVDMHGFSP), 415–449 (DIVTYHTLIKAYLKVGDLSGALEMMREMGQKGIKM), 450–484 (NTITLNTILDALCKERKLDEAHNLLNSAHKRGFIV), 485–519 (DEVTYGTLIMGFFREEKVEKALEMWDEMKKVKITP), 520–554 (TVSTFNSLIGGLCHHGKTELAMEKFDELAESGLLP), 555–589 (DDSTFNSIILGYCKEGRVEKAFEFYNESIKHSFKP), 590–620 (DNYTCNILLNGLCKEGMTEKALNFFNTLIEE), 624–658 (DTVTYNTMISAFCKDKKLKEAYDLLSEMEEKGLEP), and 659–689 (DRFTYNSFISLLMEDGKLSETDELLKKFSGK).

The protein belongs to the PPR family. P subfamily.

This Arabidopsis thaliana (Mouse-ear cress) protein is Pentatricopeptide repeat-containing protein At2g16880.